The primary structure comprises 537 residues: Ribonuclease Y (537 aa).

Residues 4 to 24 (FPIIMSVFAAIIGLVIGYVSV) form a helical membrane-spanning segment. Residues 112–148 (ASTLDRKDDNLSNKEKALEQKEQSLSDKSKHIDAREE) form a disordered region. A KH domain is found at 227–287 (TNSTVHLPDD…IRREIARMTM (61 aa)). Positions 353-446 (VLRHSIEVAK…VAAADALSAA (94 aa)) constitute an HD domain.

The protein belongs to the RNase Y family.

The protein resides in the cell membrane. Functionally, endoribonuclease that initiates mRNA decay. The protein is Ribonuclease Y of Streptococcus sanguinis (strain SK36).